The sequence spans 140 residues: UPF0654 protein C22G7.11c (140 aa).

Disordered regions lie at residues 1-88 (MPDP…DPMK) and 110-140 (YKAT…ETQA). The span at 24 to 33 (AKERAEDYIE) shows a compositional bias: basic and acidic residues. Over residues 34 to 44 (SHSSGQETGDY) the composition is skewed to polar residues. Positions 54-71 (DYEDLGDYDEDADFDNEE) are enriched in acidic residues.

Belongs to the UPF0654 (con-6) family.

In Schizosaccharomyces pombe (strain 972 / ATCC 24843) (Fission yeast), this protein is UPF0654 protein C22G7.11c.